We begin with the raw amino-acid sequence, 203 residues long: Cold-regulated 413 plasma membrane protein 2 (203 aa).

Residues 1–43 lie on the Extracellular side of the membrane; it reads MGRMDYLAMKTDDVDTVALVNSDMEELKVAAKKLFSDVSKLGG. The helical transmembrane segment at 44 to 64 threads the bilayer; sequence LGFGVSFLKFLASFAAIYLLI. The Cytoplasmic portion of the chain corresponds to 65–74; that stretch reads LDRTNWKTKM. Residues 75–95 traverse the membrane as a helical segment; that stretch reads LTSLLIPYIFLSLPSVIFNFL. The Extracellular portion of the chain corresponds to 96-98; sequence SGD. A helical transmembrane segment spans residues 99-119; that stretch reads VGKWIAFVAVVLRLFFPKHFP. Residue Asp120 is a topological domain, cytoplasmic. The chain crosses the membrane as a helical span at residues 121 to 141; it reads WLEMPGSLILLLVVSPHFLAH. Topologically, residues 142–144 are extracellular; sequence HIR. A helical membrane pass occupies residues 145-165; it reads GTWIGTVISLFIGCYLLQEHI. Topologically, residues 166-179 are cytoplasmic; the sequence is RASGGFRNSFTQPR. The helical transmembrane segment at 180-200 threads the bilayer; that stretch reads GVSNTLGIILLLVYPVWALIV. Residues 201-203 lie on the Extracellular side of the membrane; the sequence is RVM.

It belongs to the Cold-regulated 413 protein family.

Its subcellular location is the cell membrane. The sequence is that of Cold-regulated 413 plasma membrane protein 2 (COR413PM2) from Arabidopsis thaliana (Mouse-ear cress).